The primary structure comprises 285 residues: Bifunctional protein FolD 2 (285 aa).

NADP(+)-binding positions include 164 to 166, Ser-189, and Val-230; that span reads GRS.

It belongs to the tetrahydrofolate dehydrogenase/cyclohydrolase family. In terms of assembly, homodimer.

It catalyses the reaction (6R)-5,10-methylene-5,6,7,8-tetrahydrofolate + NADP(+) = (6R)-5,10-methenyltetrahydrofolate + NADPH. It carries out the reaction (6R)-5,10-methenyltetrahydrofolate + H2O = (6R)-10-formyltetrahydrofolate + H(+). It participates in one-carbon metabolism; tetrahydrofolate interconversion. In terms of biological role, catalyzes the oxidation of 5,10-methylenetetrahydrofolate to 5,10-methenyltetrahydrofolate and then the hydrolysis of 5,10-methenyltetrahydrofolate to 10-formyltetrahydrofolate. In Geobacter sulfurreducens (strain ATCC 51573 / DSM 12127 / PCA), this protein is Bifunctional protein FolD 2.